The chain runs to 344 residues: Dihydroorotate dehydrogenase (quinone) (344 aa).

Residues 64 to 68 (AGLDK) and T88 each bind FMN. K68 contributes to the substrate binding site. Residue 113–117 (NRMGF) participates in substrate binding. FMN-binding residues include N144 and N177. Substrate is bound at residue N177. The Nucleophile role is filled by S180. N182 is a binding site for substrate. Residues K222 and T250 each coordinate FMN. Residue 251-252 (NT) participates in substrate binding. FMN is bound by residues G273, G302, and 323-324 (YS).

It belongs to the dihydroorotate dehydrogenase family. Type 2 subfamily. Monomer. The cofactor is FMN.

The protein resides in the cell membrane. The enzyme catalyses (S)-dihydroorotate + a quinone = orotate + a quinol. It participates in pyrimidine metabolism; UMP biosynthesis via de novo pathway; orotate from (S)-dihydroorotate (quinone route): step 1/1. Its function is as follows. Catalyzes the conversion of dihydroorotate to orotate with quinone as electron acceptor. This is Dihydroorotate dehydrogenase (quinone) from Polynucleobacter necessarius subsp. necessarius (strain STIR1).